The sequence spans 372 residues: Stress-activated protein kinase JNK (372 aa).

The Protein kinase domain maps to Tyr24 to Ile320. Residues Gly31 to Gly36 and Lys53 each bind ATP. Asp149 functions as the Proton acceptor in the catalytic mechanism. Residue Thr181 is modified to Phosphothreonine. A TXY motif is present at residues Thr181 to Tyr183. Position 183 is a phosphotyrosine (Tyr183).

This sequence belongs to the protein kinase superfamily. CMGC Ser/Thr protein kinase family. MAP kinase subfamily. Interacts with MKP-4 (via tyrosine-protein phosphatase domain); the interaction dephosphorylates bsk. Mg(2+) serves as cofactor. Post-translationally, dually phosphorylated on Thr-181 and Tyr-183, which activates the enzyme. During gastrulation, expression is seen in cells undergoing morphogenetic movements. By stage 9 of embryonic development, expression is ubiquitous. At stages 12-14, expression occurs in epidermis and central nervous system. At stage 15, expression is restricted to ventral nerve cord, brain and some peripheral neurons. In larvae, expression is seen in all imaginal disks, with highest levels in wing and eye disks, and in the CNS. Adults express the protein in fat body and hemocytes.

It localises to the nucleus. Its subcellular location is the cytoplasm. It catalyses the reaction L-seryl-[protein] + ATP = O-phospho-L-seryl-[protein] + ADP + H(+). It carries out the reaction L-threonyl-[protein] + ATP = O-phospho-L-threonyl-[protein] + ADP + H(+). With respect to regulation, activated by threonine and tyrosine phosphorylation by the dual specificity kinase, hep. Inhibited by dual specificity phosphatase, puckered. Its function is as follows. Mitogen-activated protein kinase and key component of the c-Jun N-terminal kinase (JNK) pathway which phosphorylate and activate transcription factors involved in a wide range of biological processes including response to various stresses, cellular proliferation, differentiation and migration, and regulation of cell shape. Responds to activation by environmental stress by phosphorylating a number of transcription factors, primarily components of AP-1 such as Jra and also the transcriptional repressor aop, and thus regulates transcriptional activity. Component of the immune response activated by bacterial infection, and is involved in wound healing and in dorsal closure, a morphogenetic movement during embryogenesis. Functions in the systematic response to wounding acting downstream of the Hayan-phenoloxidase PPO1 cascade. During epidermal wound healing involved in cellular polarization by inducing the translocation of sktl and mys/integrin beta to the trailing edge. Exhibits cytoprotective activity in neuronal cells in response to wounding to the integument. Controls the expression of a phosphatase, puckered, at the edges of wounded epidermal tissue and in the dorsal epithelium during dorsal closure. Regulates the activity of SREBP in neurons and thereby the accumulation of lipids in glia. Plays a role in positively regulating the expression of DIP2 independently of AP-1, thereby ensuring proper axon guidance in mushroom bodies. In enterocytes and differentiating progenitors of the gut that are experiencing inorganic phosphate (Pi) deficiency, activated by Cka to induce nearby progenitor cells to proliferate and form new absorptive cells, probably helping the organism to cope with the nutrient deficiency by maximizing absorption of dietary Pi. In Drosophila melanogaster (Fruit fly), this protein is Stress-activated protein kinase JNK.